A 364-amino-acid chain; its full sequence is Alanine racemase (364 aa).

The active-site Proton acceptor; specific for D-alanine is the Lys-34. Lys-34 is modified (N6-(pyridoxal phosphate)lysine). Arg-129 serves as a coordination point for substrate. Residue Tyr-259 is the Proton acceptor; specific for L-alanine of the active site. Met-307 is a binding site for substrate.

Belongs to the alanine racemase family. Pyridoxal 5'-phosphate is required as a cofactor.

The catalysed reaction is L-alanine = D-alanine. The protein operates within amino-acid biosynthesis; D-alanine biosynthesis; D-alanine from L-alanine: step 1/1. In terms of biological role, catalyzes the interconversion of L-alanine and D-alanine. May also act on other amino acids. The sequence is that of Alanine racemase (alr) from Coxiella burnetii (strain CbuG_Q212) (Coxiella burnetii (strain Q212)).